A 170-amino-acid chain; its full sequence is MPSDVASRTGLPTPWTVRYSKSKKREYFFNPETKHSQWEEPEGTNKDQLHKHLRDHPVRVRCLHILIKHKDSRRPASHRSENITISKQDATDELKTLITRLDDDSKTNSFEALAKERSDCSSYKRGGDLGWFGRGEMQPSFEDAAFQLKVGEVSDIVESGSGVHVIKRVG.

Residues 9-43 (TGLPTPWTVRYSKSKKREYFFNPETKHSQWEEPEG) enclose the WW domain. The segment at 30 to 53 (NPETKHSQWEEPEGTNKDQLHKHL) is disordered. A compositionally biased stretch (basic and acidic residues) spans 32 to 53 (ETKHSQWEEPEGTNKDQLHKHL). One can recognise a PpiC domain in the interval 57–170 (PVRVRCLHIL…SGVHVIKRVG (114 aa)). Ser-161 carries the phosphoserine modification.

It belongs to the PpiC/parvulin rotamase family. As to quaternary structure, interacts with the RNA polymerase II largest subunit (RPB1) and with the SIN1-RDP3 HDAC subunit SIN3.

Its subcellular location is the cytoplasm. The protein localises to the nucleus. The enzyme catalyses [protein]-peptidylproline (omega=180) = [protein]-peptidylproline (omega=0). Its activity is regulated as follows. Inhibited by 5-hydroxy-1,4-naphthoquinone (juglone), but not by FK506 or cyclosporin A. In terms of biological role, essential PPIase specific for phosphoserine and phosphothreonine N-terminal to the proline residue. Required for efficient pre-mRNA 3'-end processing and transcription termination, probably by inducing conformational changes by proline-directed isomerization in the C-terminal domain (CTD) of RPB1, thereby altering cofactor binding with the RNA polymerase II transcription complex. Also targets the SIN3-RPD3 histone deacetylase complex (HDAC). The chain is Peptidyl-prolyl cis-trans isomerase ESS1 (ESS1) from Saccharomyces cerevisiae (strain ATCC 204508 / S288c) (Baker's yeast).